Here is a 510-residue protein sequence, read N- to C-terminus: Leucine-rich repeat protein lrrA (510 aa).

20 LRR repeats span residues 14-34 (YRKR…PPTI), 35-59 (GALQ…IGKL), 60-82 (SKVE…IGSL), 84-106 (TLKQ…NIGA), 107-130 (LKNL…ISNC), 132-152 (ALEY…EFGK), 153-176 (LYNL…ISGW), 177-200 (VKLE…CLLG), 202-222 (LSTL…LSSM), 224-245 (SLTN…LSNL), 246-270 (RQLK…LLSE), 272-292 (IELD…IATL), 293-315 (INLQ…VGNL), 316-340 (INLQ…IGKL), 341-363 (VNLK…IASM), 365-386 (ALKE…IGEL), 387-408 (SGLT…SFGN), 410-432 (SELQ…LDGL), 433-458 (KSCT…LIGL), and 460-478 (ILDV…IVMK).

It localises to the cytoplasm. Involved in cytoskeleton remodeling, which is needed for normal chemotactic aggregation and efficient cell sorting during multicellular morphogenesis. The polypeptide is Leucine-rich repeat protein lrrA (lrrA) (Dictyostelium discoideum (Social amoeba)).